Consider the following 508-residue polypeptide: Bifunctional purine biosynthesis protein PurH (508 aa).

The MGS-like domain occupies Met1–Val145.

The protein belongs to the PurH family.

The catalysed reaction is (6R)-10-formyltetrahydrofolate + 5-amino-1-(5-phospho-beta-D-ribosyl)imidazole-4-carboxamide = 5-formamido-1-(5-phospho-D-ribosyl)imidazole-4-carboxamide + (6S)-5,6,7,8-tetrahydrofolate. It catalyses the reaction IMP + H2O = 5-formamido-1-(5-phospho-D-ribosyl)imidazole-4-carboxamide. The protein operates within purine metabolism; IMP biosynthesis via de novo pathway; 5-formamido-1-(5-phospho-D-ribosyl)imidazole-4-carboxamide from 5-amino-1-(5-phospho-D-ribosyl)imidazole-4-carboxamide (10-formyl THF route): step 1/1. Its pathway is purine metabolism; IMP biosynthesis via de novo pathway; IMP from 5-formamido-1-(5-phospho-D-ribosyl)imidazole-4-carboxamide: step 1/1. This Petrotoga mobilis (strain DSM 10674 / SJ95) protein is Bifunctional purine biosynthesis protein PurH.